The sequence spans 96 residues: Alpha-elapitoxin-Al2b (96 aa).

The N-terminal stretch at 1–21 (MKTLLLTLVVVTIVCLDFGGG) is a signal peptide. Intrachain disulfides connect Cys-24-Cys-41, Cys-34-Cys-62, Cys-47-Cys-51, Cys-66-Cys-77, and Cys-78-Cys-83.

It belongs to the three-finger toxin family. Long-chain subfamily. Type II alpha-neurotoxin sub-subfamily. In terms of tissue distribution, expressed by the venom gland.

The protein resides in the secreted. Functionally, potent long-chain postsynaptic neurotoxin. Pseudo-irreversibly inhibits the nicotinic acetylcholine receptor through competitive antagonism. The chain is Alpha-elapitoxin-Al2b from Austrelaps labialis (Pygmy copperhead).